The primary structure comprises 232 residues: Large ribosomal subunit protein uL1 (232 aa).

It belongs to the universal ribosomal protein uL1 family. In terms of assembly, part of the 50S ribosomal subunit.

Functionally, binds directly to 23S rRNA. The L1 stalk is quite mobile in the ribosome, and is involved in E site tRNA release. Its function is as follows. Protein L1 is also a translational repressor protein, it controls the translation of the L11 operon by binding to its mRNA. The chain is Large ribosomal subunit protein uL1 from Paraburkholderia xenovorans (strain LB400).